The chain runs to 758 residues: 5-methyltetrahydropteroyltriglutamate--homocysteine methyltransferase (758 aa).

5-methyltetrahydropteroyltri-L-glutamate contacts are provided by residues Arg15 to Lys18 and Lys114. L-homocysteine contacts are provided by residues Ile433–Ser435 and Glu486. Residues Ile433–Ser435 and Glu486 contribute to the L-methionine site. Residues Arg517–Cys518 and Trp563 contribute to the 5-methyltetrahydropteroyltri-L-glutamate site. An L-homocysteine-binding site is contributed by Asp601. Asp601 serves as a coordination point for L-methionine. Glu607 contacts 5-methyltetrahydropteroyltri-L-glutamate. Zn(2+) is bound by residues His643, Cys645, and Glu667. The active-site Proton donor is the His696. Residue Cys728 participates in Zn(2+) binding.

The protein belongs to the vitamin-B12 independent methionine synthase family. Zn(2+) is required as a cofactor.

It catalyses the reaction 5-methyltetrahydropteroyltri-L-glutamate + L-homocysteine = tetrahydropteroyltri-L-glutamate + L-methionine. It functions in the pathway amino-acid biosynthesis; L-methionine biosynthesis via de novo pathway; L-methionine from L-homocysteine (MetE route): step 1/1. Functionally, catalyzes the transfer of a methyl group from 5-methyltetrahydrofolate to homocysteine resulting in methionine formation. The protein is 5-methyltetrahydropteroyltriglutamate--homocysteine methyltransferase of Syntrophotalea carbinolica (strain DSM 2380 / NBRC 103641 / GraBd1) (Pelobacter carbinolicus).